The sequence spans 283 residues: tRNA pseudouridine synthase B (283 aa).

Residue D38 is the Nucleophile of the active site.

Belongs to the pseudouridine synthase TruB family. Type 1 subfamily.

The catalysed reaction is uridine(55) in tRNA = pseudouridine(55) in tRNA. In terms of biological role, responsible for synthesis of pseudouridine from uracil-55 in the psi GC loop of transfer RNAs. In Onion yellows phytoplasma (strain OY-M), this protein is tRNA pseudouridine synthase B.